A 515-amino-acid chain; its full sequence is Protein disulfide-isomerase (515 aa).

The signal sequence occupies residues 1–20 (MRSFAPWLVSLLGASAVVAA). 2 consecutive Thioredoxin domains span residues 21–132 (ADTE…QSLP) and 339–470 (VLDG…ENGK). Catalysis depends on nucleophile residues Cys54, Cys57, Cys389, and Cys392. Intrachain disulfides connect Cys54-Cys57 and Cys389-Cys392. The disordered stretch occupies residues 478-515 (VASEETQEGGDVTEAAPSATEAETPAATDDEKAEHDEL). Positions 490 to 504 (TEAAPSATEAETPAA) are enriched in low complexity. Positions 506 to 515 (DDEKAEHDEL) are enriched in basic and acidic residues. Positions 512 to 515 (HDEL) match the Prevents secretion from ER motif.

The protein belongs to the protein disulfide isomerase family.

It localises to the endoplasmic reticulum lumen. The catalysed reaction is Catalyzes the rearrangement of -S-S- bonds in proteins.. Functionally, participates in the folding of proteins containing disulfide bonds, may be involved in glycosylation, prolyl hydroxylation and triglyceride transfer. This chain is Protein disulfide-isomerase (pdiA), found in Aspergillus niger.